The sequence spans 1118 residues: Carbamoyl phosphate synthase arginine-specific large chain (1118 aa).

The interval 23-420 (QLVEGVNSVL…AFQKALRQVD (398 aa)) is carboxyphosphate synthetic domain. ATP is bound by residues arginine 150, arginine 190, glycine 196, glycine 197, lysine 227, leucine 229, glutamate 234, glycine 260, valine 261, histidine 262, glutamine 303, and glutamate 317. The region spanning 154-346 (ASALKDINIP…LAYTAAKIGL (193 aa)) is the ATP-grasp 1 domain. Residues glutamine 303, glutamate 317, and asparagine 319 each coordinate Mg(2+). The Mn(2+) site is built by glutamine 303, glutamate 317, and asparagine 319. Residues 421 to 573 (PSLLGFQGST…YTTYNATKND (153 aa)) form an oligomerization domain region. The carbamoyl phosphate synthetic domain stretch occupies residues 574-958 (VEFNENGMLV…SYWTAIQSTM (385 aa)). The ATP-grasp 2 domain occupies 698–890 (SSILDSIDVD…FIEIAVKAFL (193 aa)). Positions 734, 773, 775, 780, 805, 806, 807, 808, 848, and 861 each coordinate ATP. The Mg(2+) site is built by glutamine 848, glutamate 861, and asparagine 863. 3 residues coordinate Mn(2+): glutamine 848, glutamate 861, and asparagine 863. The allosteric domain stretch occupies residues 959-1102 (NFHVPLPPSG…KILESHDVIV (144 aa)). Residues 960–1118 (FHVPLPPSGI…WDEFIGFKAY (159 aa)) enclose the MGS-like domain.

This sequence belongs to the CarB family. As to quaternary structure, heterodimer composed of 2 chains; the small (or glutamine) chain promotes the hydrolysis of glutamine to ammonia, which is used by the large (or ammonia) chain to synthesize carbamoyl phosphate. Requires Mg(2+) as cofactor. Mn(2+) is required as a cofactor.

The protein resides in the cytoplasm. The catalysed reaction is hydrogencarbonate + L-glutamine + 2 ATP + H2O = carbamoyl phosphate + L-glutamate + 2 ADP + phosphate + 2 H(+). It catalyses the reaction hydrogencarbonate + NH4(+) + 2 ATP = carbamoyl phosphate + 2 ADP + phosphate + 2 H(+). Its pathway is amino-acid biosynthesis; L-arginine biosynthesis; carbamoyl phosphate from bicarbonate: step 1/1. Functionally, large subunit of the arginine-specific carbamoyl phosphate synthase (CPSase). CPSase catalyzes the formation of carbamoyl phosphate from the ammonia moiety of glutamine, hydrogencarbonate, and phosphate donated by ATP, constituting the first step of 2 biosynthetic pathways, one leading to arginine and/or urea and the other to pyrimidine nucleotides. The large subunit (synthetase) binds the substrates ammonia (free or transferred from glutamine from the small subunit), hydrogencarbonate and ATP and carries out an ATP-coupled ligase reaction, activating hydrogencarbonate by forming carboxy phosphate which reacts with ammonia to form carbamoyl phosphate. The polypeptide is Carbamoyl phosphate synthase arginine-specific large chain (CPA2) (Saccharomyces cerevisiae (strain ATCC 204508 / S288c) (Baker's yeast)).